Here is a 146-residue protein sequence, read N- to C-terminus: Hemoglobin subunit beta (146 aa).

Val1 is modified (N-acetylvaline). Positions 2–146 (QLSGEEKAAV…VANALAHKYH (145 aa)) constitute a Globin domain. Ser44 carries the phosphoserine modification. Residue Lys59 is modified to N6-acetyllysine. Heme b is bound at residue His63. An N6-acetyllysine modification is found at Lys82. Residue His92 coordinates heme b. Cys93 bears the S-nitrosocysteine mark. Position 144 is an N6-acetyllysine (Lys144).

The protein belongs to the globin family. As to quaternary structure, heterotetramer of two alpha chains and two beta chains. In terms of tissue distribution, red blood cells.

In terms of biological role, involved in oxygen transport from the lung to the various peripheral tissues. This is Hemoglobin subunit beta (HBB) from Equus caballus (Horse).